A 1464-amino-acid chain; its full sequence is Glutamate receptor ionotropic, NMDA 2A (1464 aa).

The N-terminal stretch at 1 to 22 (MGRVGYWTLLVLPALLVWRGPA) is a signal peptide. Over 23-556 (PSAAAEKGPP…SAFLEPFSAS (534 aa)) the chain is Extracellular. His44 is a Zn(2+) binding site. N-linked (GlcNAc...) asparagine glycosylation is present at Asn75. A disulfide bridge links Cys87 with Cys320. The Zn(2+) site is built by His128, Glu266, and Asp282. N-linked (GlcNAc...) asparagine glycosylation is found at Asn340, Asn380, Asn443, and Asn444. 2 disulfide bridges follow: Cys429–Cys455 and Cys436–Cys456. L-glutamate contacts are provided by Ser511, Thr513, and Arg518. A glycan (N-linked (GlcNAc...) asparagine) is linked at Asn541. A helical transmembrane segment spans residues 557 to 576 (VWVMMFVMLLIVSAIAVFVF). At 577–600 (EYFSPVGYNRNLAKGKAPHGPSFT) the chain is on the cytoplasmic side. Residues 599–620 (FTIGKAIWLLWGLVFNNSVPVQ) are pore-forming. An intramembrane region (discontinuously helical) is located at residues 601-615 (IGKAIWLLWGLVFNN). The Cytoplasmic portion of the chain corresponds to 616–625 (SVPVQNPKGT). The chain crosses the membrane as a helical span at residues 626–646 (TSKIMVSVWAFFAVIFLASYT). Over 647–814 (ANLAAFMIQE…NEVMSSQLDI (168 aa)) the chain is Extracellular. Asn687 carries N-linked (GlcNAc...) asparagine glycosylation. L-glutamate is bound by residues Ser689, Thr690, and Asp731. Cys745 and Cys800 are oxidised to a cystine. A helical transmembrane segment spans residues 815 to 835 (DNMAGVFYMLAAAMALSLITF). Topologically, residues 836–1464 (IWEHLFYWKL…KKMPSIESDV (629 aa)) are cytoplasmic. 3 positions are modified to phosphoserine: Ser882, Ser890, and Ser929. Composition is skewed to polar residues over residues 997-1010 (EVAVSTESKANSRP) and 1023-1032 (QDSLSQNPVS). The disordered stretch occupies residues 997 to 1083 (EVAVSTESKA…PDNSKNHKTK (87 aa)). At Ser1025 the chain carries Phosphoserine. Composition is skewed to basic and acidic residues over residues 1033–1043 (QRDEATAENRT) and 1052–1061 (LPEEMAHSDI). Phosphoserine is present on residues Ser1059 and Ser1062. Basic and acidic residues predominate over residues 1070-1083 (CHREPDNSKNHKTK). 2 positions are modified to phosphoserine: Ser1198 and Ser1291. A disordered region spans residues 1335-1372 (KLSGKKSSLFPQGLEDSKRSKSLLPDHTSDNPFLHSHR). The short motif at 1462–1464 (SDV) is the PDZ-binding element.

This sequence belongs to the glutamate-gated ion channel (TC 1.A.10.1) family. NR2A/GRIN2A subfamily. Heterotetramer. Forms heterotetrameric channels composed of two GluN1/zeta subunits (GRIN1), and two identical GluN2/epsilon subunits (GRIN2A, GRIN2B, GRIN2C or GRIN2D) or GluN3 subunits (GRIN3A or GRIN3B) (in vitro). Can also form heterotetrameric channels that contain at least two GluN1 subunits and at least two different GluN2 subunits (or a combination of one GluN2 and one GluN3 subunits) (in vitro). In vivo, the subunit composition may depend on the expression levels of the different subunits. Found in a complex with GRIN1, GRIN3A and PPP2CB. Found in a complex with GRIN1 and GRIN3B. Interacts with AIP1. Interacts with HIP1 and NETO1. Interacts with SNX27 (via PDZ domain); the interaction is required for recycling to the plasma membrane when endocytosed and prevent degradation in lysosomes. Interacts with PDZ domains of PATJ and DLG4. Interacts with LRFN2. Interacts with RPH3A and DLG4; this ternary complex regulates NMDA receptor composition at postsynaptic membranes. Interacts with SORCS2. Interacts with ARC; preventing ARC oligomerization. Interacts (via the extreme C-terminus) with FRMPD2 (the second PDZ domain); the interaction is direct and is likely to promote NMDAR-mediated neural signal transmission. GRIN2A binds FRMPD2 with lower affinity than GRIN2B.

The protein resides in the cell projection. It localises to the dendritic spine. Its subcellular location is the cell membrane. It is found in the synapse. The protein localises to the postsynaptic cell membrane. The protein resides in the cytoplasmic vesicle membrane. The enzyme catalyses Ca(2+)(in) = Ca(2+)(out). The catalysed reaction is Na(+)(in) = Na(+)(out). It carries out the reaction K(+)(in) = K(+)(out). Its activity is regulated as follows. NMDA glutamate receptor activity is inhibited by endogenous Mg(2+) in a voltage-dependent manner. NMDA glutamate receptor activity is inhibited by endogenous Zn(2+). NMDA glutamate receptor activity is inhibited by endogenous protons. Component of N-methyl-D-aspartate (NMDA) receptors (NMDARs) that function as heterotetrameric, ligand-gated cation channels with high calcium permeability and voltage-dependent block by Mg(2+). NMDARs participate in synaptic plasticity for learning and memory formation by contributing to the slow phase of excitatory postsynaptic current, long-term synaptic potentiation, and learning. Channel activation requires binding of the neurotransmitter L-glutamate to the GluN2 subunit, glycine or D-serine binding to the GluN1 subunit, plus membrane depolarization to eliminate channel inhibition by Mg(2+). NMDARs mediate simultaneously the potasium efflux and the influx of calcium and sodium. Each GluN2 subunit confers differential attributes to channel properties, including activation, deactivation and desensitization kinetics, pH sensitivity, Ca2(+) permeability, and binding to allosteric modulators. Participates in the synaptic plasticity regulation through activation by the L-glutamate releaseed by BEST1, into the synaptic cleft, upon F2R/PAR-1 activation in astrocyte. The protein is Glutamate receptor ionotropic, NMDA 2A of Homo sapiens (Human).